The sequence spans 419 residues: GTPase Obg (419 aa).

In terms of domain architecture, Obg spans 1–158; the sequence is MFVDQARIFV…KWIRLELKLL (158 aa). The OBG-type G domain maps to 159–327; sequence ADVGLVGFPN…LMGKTYALLQ (169 aa). GTP is bound by residues 165 to 172, 190 to 194, 212 to 215, 282 to 285, and 308 to 310; these read GFPNAGKS, FTTLV, DIPG, NKMD, and SAV. Mg(2+)-binding residues include Ser-172 and Thr-192. The OCT domain occupies 342–419; the sequence is RRFEEELPFK…IKDFEFEFTE (78 aa).

This sequence belongs to the TRAFAC class OBG-HflX-like GTPase superfamily. OBG GTPase family. In terms of assembly, monomer. It depends on Mg(2+) as a cofactor.

It is found in the cytoplasm. An essential GTPase which binds GTP, GDP and possibly (p)ppGpp with moderate affinity, with high nucleotide exchange rates and a fairly low GTP hydrolysis rate. Plays a role in control of the cell cycle, stress response, ribosome biogenesis and in those bacteria that undergo differentiation, in morphogenesis control. The sequence is that of GTPase Obg from Syntrophomonas wolfei subsp. wolfei (strain DSM 2245B / Goettingen).